A 515-amino-acid chain; its full sequence is Putative cytochrome P450 CYP13A2 (515 aa).

Cys-460 serves as a coordination point for heme.

Belongs to the cytochrome P450 family. The cofactor is heme.

Cytochromes P450 are a group of heme-thiolate monooxygenases. They oxidize a variety of structurally unrelated compounds, including steroids, fatty acids, and xenobiotics. The chain is Putative cytochrome P450 CYP13A2 (cyp-13A2) from Caenorhabditis elegans.